Here is a 432-residue protein sequence, read N- to C-terminus: Trigger factor (432 aa).

Residues 165–250 (GDFAKIDFEG…LKEIQVKAPQ (86 aa)) enclose the PPIase FKBP-type domain.

The protein belongs to the FKBP-type PPIase family. Tig subfamily.

It localises to the cytoplasm. The catalysed reaction is [protein]-peptidylproline (omega=180) = [protein]-peptidylproline (omega=0). In terms of biological role, involved in protein export. Acts as a chaperone by maintaining the newly synthesized protein in an open conformation. Functions as a peptidyl-prolyl cis-trans isomerase. The chain is Trigger factor from Wolinella succinogenes (strain ATCC 29543 / DSM 1740 / CCUG 13145 / JCM 31913 / LMG 7466 / NCTC 11488 / FDC 602W) (Vibrio succinogenes).